The chain runs to 252 residues: JmjC domain-containing protein A (252 aa).

Residues 103–252 (PYLRNFGMLD…VSCWGKEMIM (150 aa)) form the JmjC domain.

This is JmjC domain-containing protein A (jcdA) from Dictyostelium discoideum (Social amoeba).